Here is a 302-residue protein sequence, read N- to C-terminus: Forkhead box protein R2 (302 aa).

A DNA-binding region (fork-head) is located at residues 183–285; that stretch reads RPPLNYSHLV…RVLAYARRES (103 aa).

The protein localises to the nucleus. The protein is Forkhead box protein R2 (Foxr2) of Mus musculus (Mouse).